Here is a 302-residue protein sequence, read N- to C-terminus: Methionyl-tRNA formyltransferase (302 aa).

Residue 107-110 (SLLP) participates in (6S)-5,6,7,8-tetrahydrofolate binding.

The protein belongs to the Fmt family.

It carries out the reaction L-methionyl-tRNA(fMet) + (6R)-10-formyltetrahydrofolate = N-formyl-L-methionyl-tRNA(fMet) + (6S)-5,6,7,8-tetrahydrofolate + H(+). In terms of biological role, attaches a formyl group to the free amino group of methionyl-tRNA(fMet). The formyl group appears to play a dual role in the initiator identity of N-formylmethionyl-tRNA by promoting its recognition by IF2 and preventing the misappropriation of this tRNA by the elongation apparatus. This is Methionyl-tRNA formyltransferase from Leifsonia xyli subsp. xyli (strain CTCB07).